The following is a 513-amino-acid chain: Probable G-protein coupled receptor 176 (513 aa).

The tract at residues Met-1 to Ala-25 is disordered. The Extracellular portion of the chain corresponds to Met-1–Gln-41. N-linked (GlcNAc...) asparagine glycosylation is found at Asn-4, Asn-11, Asn-17, and Asn-26. The helical transmembrane segment at Phe-42–Ser-64 threads the bilayer. At Thr-65–Arg-77 the chain is on the cytoplasmic side. A helical membrane pass occupies residues Phe-78–Ile-98. Residues Ile-99–Trp-108 lie on the Extracellular side of the membrane. A helical membrane pass occupies residues Trp-109–Val-129. At Thr-130 to Lys-157 the chain is on the cytoplasmic side. Residues Ser-158–Phe-177 traverse the membrane as a helical segment. The Extracellular portion of the chain corresponds to Ala-178–Tyr-204. A helical membrane pass occupies residues Val-205–Ile-225. The Cytoplasmic portion of the chain corresponds to Leu-226–His-264. The helical transmembrane segment at Ala-265–Val-285 threads the bilayer. The Extracellular segment spans residues Val-286 to Leu-301. A helical transmembrane segment spans residues Leu-302–Val-322. Residues Asn-323 to Ser-513 are Cytoplasmic-facing. Positions Val-404–Val-432 are disordered.

The protein belongs to the G-protein coupled receptor 1 family. As to expression, expressed in brain, lung, heart, stomach, intestine, cultured aortic smooth muscle cells and cardiac myocytes.

Its subcellular location is the cell membrane. Functionally, orphan receptor involved in normal circadian rhythm behavior. Acts through the G-protein subclass G(z)-alpha and has an agonist-independent basal activity to repress cAMP production. The sequence is that of Probable G-protein coupled receptor 176 (Gpr176) from Rattus norvegicus (Rat).